The following is a 150-amino-acid chain: Ribosomal RNA large subunit methyltransferase H (150 aa).

S-adenosyl-L-methionine is bound by residues Ala100 and 118 to 123 (LSEMTF).

This sequence belongs to the RNA methyltransferase RlmH family. Homodimer.

It localises to the cytoplasm. It carries out the reaction pseudouridine(1915) in 23S rRNA + S-adenosyl-L-methionine = N(3)-methylpseudouridine(1915) in 23S rRNA + S-adenosyl-L-homocysteine + H(+). Specifically methylates the pseudouridine at position 1915 (m3Psi1915) in 23S rRNA. The polypeptide is Ribosomal RNA large subunit methyltransferase H (Helicobacter pylori (strain ATCC 700392 / 26695) (Campylobacter pylori)).